A 245-amino-acid polypeptide reads, in one-letter code: 8-amino-3,8-dideoxy-manno-octulosonate cytidylyltransferase (245 aa).

It belongs to the KdsB family.

The protein resides in the cytoplasm. The catalysed reaction is 8-amino-3,8-dideoxy-alpha-D-manno-octulosonate + CTP = CMP-8-amino-3,8-dideoxy-alpha-D-manno-oct-2-ulosonate + diphosphate. It participates in bacterial outer membrane biogenesis; lipopolysaccharide biosynthesis. Functionally, activates KDO8N (a required 8-carbon sugar) for incorporation into bacterial lipopolysaccharide in the Shewanella genus. The chain is 8-amino-3,8-dideoxy-manno-octulosonate cytidylyltransferase from Shewanella woodyi (strain ATCC 51908 / MS32).